We begin with the raw amino-acid sequence, 415 residues long: D-threonate kinase (415 aa).

Residues Asp-9, Arg-53, and 81-84 (KIDS) contribute to the substrate site. Residues Ser-251, 345–348 (GGET), and Gly-392 each bind ATP.

The protein belongs to the four-carbon acid sugar kinase family.

The enzyme catalyses D-threonate + ATP = 4-O-phospho-D-threonate + ADP + H(+). In terms of biological role, catalyzes the ATP-dependent phosphorylation of D-threonate to D-threonate 4-phosphate. Can also phosphorylate 4-hydroxy-L-threonine, with lower efficiency. The polypeptide is D-threonate kinase (Cupriavidus necator (strain ATCC 17699 / DSM 428 / KCTC 22496 / NCIMB 10442 / H16 / Stanier 337) (Ralstonia eutropha)).